A 231-amino-acid polypeptide reads, in one-letter code: NADH-ubiquinone oxidoreductase chain 4 (231 aa).

Transmembrane regions (helical) follow at residues 1–21, 34–54, 61–80, 84–106, 128–148, 156–176, and 211–231; these read PIAGSMVLAAILLKLGGYGII, VFLPFIVLALWGAILANLTCL, SLIAYSSVSHMGLVVAAIII, WGLSGAMALMIAHGFTSSALFCL, ILPMATTWWLLINLMNIATPP, LLIISALFNWCPTTMIMLGLS, and LLMILHIIPLVLISMKPELVI.

This sequence belongs to the complex I subunit 4 family.

Its subcellular location is the mitochondrion membrane. The catalysed reaction is a ubiquinone + NADH + 5 H(+)(in) = a ubiquinol + NAD(+) + 4 H(+)(out). Core subunit of the mitochondrial membrane respiratory chain NADH dehydrogenase (Complex I) that is believed to belong to the minimal assembly required for catalysis. Complex I functions in the transfer of electrons from NADH to the respiratory chain. The immediate electron acceptor for the enzyme is believed to be ubiquinone. The sequence is that of NADH-ubiquinone oxidoreductase chain 4 (MT-ND4) from Tropidolaemus wagleri (Wagler's pit viper).